Here is a 503-residue protein sequence, read N- to C-terminus: MKKFKNISITFLILISLGVLNSCESVLEVEPESSISDEQFWKTNEDAKLGLAAAYDALQKAYRTKRFYWGEFRADNYVNSEKPQPDTQDLINNNLTPESSTEYLQWDEFYSLIFRANLAIEKIPEIPYYDTQYLGEAYALRAFAYFDAYRVWGGVPLFTKAELTFSDDAIKPRSSAQEVLDLVLSDIEEAEKNLTVVSSDYTFSKLSLLAFKAQVHMYLNEYEAANTALTSLIASNQFSLTTNRKQWRDLFLNDEINYPGEGQEGPELIMSIRYDFEEDGNRASGIYQVFFPGVPSYYVAPNLVEEWETKFPTDSTAWATKYPNVPPHVFEENEDTGELNAKYGDYRYYESIAAPGTQEEDLRISKYHKVNISPSIDDTNIILFRYADMLLLKAEALNQLGQPTEAIELVNQIREARELPLVNSGTIPDVVNINDKDELEDFILSERRLELLAEGYRWWDLVRTNKAVEVMGPINGLTQDRIIWPLWFRHLIDNPKLEQNVPY.

Residues 1–21 form the signal peptide; sequence MKKFKNISITFLILISLGVLN.

Belongs to the SusD family.

The protein localises to the cell outer membrane. Polysaccharide-binding protein probably involved in ulvan degradation. Ulvan is the main polysaccharide component of the Ulvales (green seaweed) cell wall. It is composed of disaccharide building blocks comprising 3-sulfated rhamnose (Rha3S) linked to D-glucuronic acid (GlcA), L-iduronic acid (IduA), or D-xylose (Xyl). The SusD-like protein may mediate ulvan oligomer-binding before transport in the periplasm for further degradation. The chain is SusD-like protein P38 from Formosa agariphila (strain DSM 15362 / KCTC 12365 / LMG 23005 / KMM 3901 / M-2Alg 35-1).